The primary structure comprises 304 residues: Urease accessory protein UreD 2 (304 aa).

Belongs to the UreD family. As to quaternary structure, ureD, UreF and UreG form a complex that acts as a GTP-hydrolysis-dependent molecular chaperone, activating the urease apoprotein by helping to assemble the nickel containing metallocenter of UreC. The UreE protein probably delivers the nickel.

The protein localises to the cytoplasm. In terms of biological role, required for maturation of urease via the functional incorporation of the urease nickel metallocenter. Disrupting the ure2 operon has no effect on urease activity or pathogen survival in BALB/c mice when administered orally. The sequence is that of Urease accessory protein UreD 2 from Brucella abortus (strain 2308).